The primary structure comprises 764 residues: Probable 5-methyltetrahydropteroyltriglutamate--homocysteine methyltransferase (764 aa).

5-methyltetrahydropteroyltri-L-glutamate-binding residues include K19 and N126. S182 is modified (phosphoserine). Residue T441 is modified to Phosphothreonine. Residues 442 to 444 and E495 contribute to the L-homocysteine site; that span reads IGS. Residues 442-444 and E495 contribute to the L-methionine site; that span reads IGS. Residues D500, Y523, 526–527, and W572 each bind 5-methyltetrahydropteroyltri-L-glutamate; that span reads RC. D610 contacts L-homocysteine. Residue D610 participates in L-methionine binding. Residues H652, C654, and E676 each coordinate Zn(2+). H703 (proton donor) is an active-site residue. C735 serves as a coordination point for Zn(2+).

This sequence belongs to the vitamin-B12 independent methionine synthase family. The cofactor is Zn(2+).

It localises to the nucleus. The protein resides in the cytoplasm. It carries out the reaction 5-methyltetrahydropteroyltri-L-glutamate + L-homocysteine = tetrahydropteroyltri-L-glutamate + L-methionine. Its pathway is amino-acid biosynthesis; L-methionine biosynthesis via de novo pathway; L-methionine from L-homocysteine (MetE route): step 1/1. Functionally, catalyzes the transfer of a methyl group from 5-methyltetrahydrofolate to homocysteine resulting in methionine formation. This chain is Probable 5-methyltetrahydropteroyltriglutamate--homocysteine methyltransferase (met26), found in Schizosaccharomyces pombe (strain 972 / ATCC 24843) (Fission yeast).